The sequence spans 338 residues: Aspartate carbamoyltransferase catalytic subunit (338 aa).

R59 and T60 together coordinate carbamoyl phosphate. K87 provides a ligand contact to L-aspartate. Positions 109, 142, and 145 each coordinate carbamoyl phosphate. Residues R182 and R253 each coordinate L-aspartate. G294 and P295 together coordinate carbamoyl phosphate.

The protein belongs to the aspartate/ornithine carbamoyltransferase superfamily. ATCase family. As to quaternary structure, heterododecamer (2C3:3R2) of six catalytic PyrB chains organized as two trimers (C3), and six regulatory PyrI chains organized as three dimers (R2).

The enzyme catalyses carbamoyl phosphate + L-aspartate = N-carbamoyl-L-aspartate + phosphate + H(+). The protein operates within pyrimidine metabolism; UMP biosynthesis via de novo pathway; (S)-dihydroorotate from bicarbonate: step 2/3. Its function is as follows. Catalyzes the condensation of carbamoyl phosphate and aspartate to form carbamoyl aspartate and inorganic phosphate, the committed step in the de novo pyrimidine nucleotide biosynthesis pathway. The protein is Aspartate carbamoyltransferase catalytic subunit of Prochlorococcus marinus subsp. pastoris (strain CCMP1986 / NIES-2087 / MED4).